Reading from the N-terminus, the 319-residue chain is Tyrosine--tRNA ligase (319 aa).

L-tyrosine is bound at residue Tyr-35. The 'HIGH' region signature appears at 40–48; sequence PSGKIHLGH. Residues Tyr-156, Gln-160, Asp-163, and Gln-178 each coordinate L-tyrosine. A 'KMSKS' region motif is present at residues 213 to 217; it reads KMSSS. An ATP-binding site is contributed by Ser-216.

The protein belongs to the class-I aminoacyl-tRNA synthetase family. TyrS type 3 subfamily. Homodimer.

The protein resides in the cytoplasm. The enzyme catalyses tRNA(Tyr) + L-tyrosine + ATP = L-tyrosyl-tRNA(Tyr) + AMP + diphosphate + H(+). Catalyzes the attachment of tyrosine to tRNA(Tyr) in a two-step reaction: tyrosine is first activated by ATP to form Tyr-AMP and then transferred to the acceptor end of tRNA(Tyr). The polypeptide is Tyrosine--tRNA ligase (Methanobrevibacter smithii (strain ATCC 35061 / DSM 861 / OCM 144 / PS)).